Consider the following 186-residue polypeptide: CRS2-like protein, chloroplastic (186 aa).

The transit peptide at 1-49 (MAMTAASVFGSGGCLELLTSSKAMRGKLWTRLAPFISKRHASTSQTSLS) directs the protein to the chloroplast. Tyr73 contacts tRNA. The active-site Proton acceptor is His78. Residues Tyr123, Asn125, and Asn171 each contribute to the tRNA site.

This sequence belongs to the PTH family.

The protein localises to the plastid. It is found in the chloroplast. This is CRS2-like protein, chloroplastic from Oryza sativa subsp. japonica (Rice).